The primary structure comprises 213 residues: Ribosomal RNA small subunit methyltransferase G (213 aa).

Residues Gly77, Met82, 104-106, and Arg145 each bind S-adenosyl-L-methionine; that span reads EKS.

This sequence belongs to the methyltransferase superfamily. RNA methyltransferase RsmG family.

It localises to the cytoplasm. It catalyses the reaction guanosine(527) in 16S rRNA + S-adenosyl-L-methionine = N(7)-methylguanosine(527) in 16S rRNA + S-adenosyl-L-homocysteine. Specifically methylates the N7 position of guanine in position 527 of 16S rRNA. In Pelagibacter ubique (strain HTCC1062), this protein is Ribosomal RNA small subunit methyltransferase G.